The sequence spans 91 residues: Small ribosomal subunit protein uS19 (91 aa).

This sequence belongs to the universal ribosomal protein uS19 family.

Functionally, protein S19 forms a complex with S13 that binds strongly to the 16S ribosomal RNA. This is Small ribosomal subunit protein uS19 from Prochlorococcus marinus (strain NATL1A).